Consider the following 128-residue polypeptide: Fluoride-specific ion channel FluC (128 aa).

The next 4 membrane-spanning stretches (helical) occupy residues 8–28 (IIFI…LGLL), 38–58 (LGTL…LAFF), 71–91 (FFVT…AEVI), and 103–123 (LMLA…GVFI). The Na(+) site is built by glycine 78 and threonine 81.

This sequence belongs to the fluoride channel Fluc/FEX (TC 1.A.43) family.

It is found in the cell inner membrane. It catalyses the reaction fluoride(in) = fluoride(out). With respect to regulation, na(+) is not transported, but it plays an essential structural role and its presence is essential for fluoride channel function. In terms of biological role, fluoride-specific ion channel. Important for reducing fluoride concentration in the cell, thus reducing its toxicity. The protein is Fluoride-specific ion channel FluC of Pasteurella multocida (strain Pm70).